A 135-amino-acid polypeptide reads, in one-letter code: Large ribosomal subunit protein uL22 (135 aa).

It belongs to the universal ribosomal protein uL22 family. As to quaternary structure, part of the 50S ribosomal subunit.

In terms of biological role, this protein binds specifically to 23S rRNA; its binding is stimulated by other ribosomal proteins, e.g. L4, L17, and L20. It is important during the early stages of 50S assembly. It makes multiple contacts with different domains of the 23S rRNA in the assembled 50S subunit and ribosome. Functionally, the globular domain of the protein is located near the polypeptide exit tunnel on the outside of the subunit, while an extended beta-hairpin is found that lines the wall of the exit tunnel in the center of the 70S ribosome. The polypeptide is Large ribosomal subunit protein uL22 (Christiangramia forsetii (strain DSM 17595 / CGMCC 1.15422 / KT0803) (Gramella forsetii)).